Here is a 127-residue protein sequence, read N- to C-terminus: Aspartate 1-decarboxylase (127 aa).

The active-site Schiff-base intermediate with substrate; via pyruvic acid is Ser25. Ser25 carries the post-translational modification Pyruvic acid (Ser). A substrate-binding site is contributed by Thr57. Catalysis depends on Tyr58, which acts as the Proton donor. 73–75 (GAA) lines the substrate pocket.

This sequence belongs to the PanD family. Heterooctamer of four alpha and four beta subunits. The cofactor is pyruvate. Post-translationally, is synthesized initially as an inactive proenzyme, which is activated by self-cleavage at a specific serine bond to produce a beta-subunit with a hydroxyl group at its C-terminus and an alpha-subunit with a pyruvoyl group at its N-terminus.

The protein localises to the cytoplasm. The catalysed reaction is L-aspartate + H(+) = beta-alanine + CO2. It functions in the pathway cofactor biosynthesis; (R)-pantothenate biosynthesis; beta-alanine from L-aspartate: step 1/1. Functionally, catalyzes the pyruvoyl-dependent decarboxylation of aspartate to produce beta-alanine. This is Aspartate 1-decarboxylase from Clostridium botulinum (strain Okra / Type B1).